We begin with the raw amino-acid sequence, 364 residues long: MALALLEDWCRILSVDDQKSLMVMGIPVDCSEDEIQEVLQEILKPLGRYKLLGKIFRKQENANAVLLELLEDPEVSVIPSKVQGKGGIWKVIFKTPNQDTEFLERLNLFLEKEGQTVSGMFRALGHQGLSPAAMPCISPELLAHVLGQVIAHPPQPLLPMRYRKLRVFSGSAVPAPEEEPFEVWLEQATEIVKEWPVAEAEKKRWLMESLRGPALDLMHIVQADNPSISVEECLEAFKQVFGNLESRRTSQVKYLKTYQEEGEKVSAYVLRLETLLRRAVEKRAIPRNIADQIRLEQVMAGASLSEVLWCRLRELKDQGRPPSFLQLMKVIREEEEEEATFENENTEEPEGGDGYGHWGNEAND.

Alanine 2 carries the post-translational modification N-acetylalanine. A compositionally biased stretch (acidic residues) spans 335–351 (EEEEATFENENTEEPEG). The tract at residues 335–364 (EEEEATFENENTEEPEGGDGYGHWGNEAND) is disordered.

It belongs to the PNMA family.

It is found in the nucleus. The protein localises to the nucleolus. The sequence is that of Paraneoplastic antigen Ma2 homolog (PNMA2) from Bos taurus (Bovine).